We begin with the raw amino-acid sequence, 1204 residues long: ATP-dependent helicase/nuclease subunit A (1204 aa).

The region spanning 2–469 (TNFTKEQDQA…IILADNFRST (468 aa)) is the UvrD-like helicase ATP-binding domain. ATP is bound at residue 23–30 (ASAGSGKT). Positions 497–784 (GQLQFGASYY…KLMTIHASKG (288 aa)) constitute a UvrD-like helicase C-terminal domain.

It belongs to the helicase family. AddA subfamily. In terms of assembly, heterodimer of AddA and AddB/RexB. The cofactor is Mg(2+).

The catalysed reaction is Couples ATP hydrolysis with the unwinding of duplex DNA by translocating in the 3'-5' direction.. It catalyses the reaction ATP + H2O = ADP + phosphate + H(+). Functionally, the heterodimer acts as both an ATP-dependent DNA helicase and an ATP-dependent, dual-direction single-stranded exonuclease. Recognizes the chi site generating a DNA molecule suitable for the initiation of homologous recombination. The AddA nuclease domain is required for chi fragment generation; this subunit has the helicase and 3' -&gt; 5' nuclease activities. This Lactobacillus gasseri (strain ATCC 33323 / DSM 20243 / BCRC 14619 / CIP 102991 / JCM 1131 / KCTC 3163 / NCIMB 11718 / NCTC 13722 / AM63) protein is ATP-dependent helicase/nuclease subunit A.